Here is a 137-residue protein sequence, read N- to C-terminus: Large ribosomal subunit protein uL16 (137 aa).

This sequence belongs to the universal ribosomal protein uL16 family. As to quaternary structure, part of the 50S ribosomal subunit.

In terms of biological role, binds 23S rRNA and is also seen to make contacts with the A and possibly P site tRNAs. This is Large ribosomal subunit protein uL16 from Lawsonia intracellularis (strain PHE/MN1-00).